The chain runs to 1117 residues: DNA polymerase II large subunit (1117 aa).

A compositionally biased stretch (basic and acidic residues) spans 279–294; that stretch reads STKEEEKKKEESSENK. The segment at 279–299 is disordered; the sequence is STKEEEKKKEESSENKPKKKA.

This sequence belongs to the archaeal DNA polymerase II family. Heterodimer of a large subunit and a small subunit.

It catalyses the reaction DNA(n) + a 2'-deoxyribonucleoside 5'-triphosphate = DNA(n+1) + diphosphate. The enzyme catalyses Exonucleolytic cleavage in the 3'- to 5'-direction to yield nucleoside 5'-phosphates.. Its function is as follows. Possesses two activities: a DNA synthesis (polymerase) and an exonucleolytic activity that degrades single-stranded DNA in the 3'- to 5'-direction. Has a template-primer preference which is characteristic of a replicative DNA polymerase. In Methanosphaera stadtmanae (strain ATCC 43021 / DSM 3091 / JCM 11832 / MCB-3), this protein is DNA polymerase II large subunit.